The primary structure comprises 397 residues: (S)-8-oxocitronellyl enol synthase ISY2 (397 aa).

NADP(+)-binding positions include 36-38 (TGL), 64-65 (RR), 82-83 (DV), 106-107 (TW), Q144, Y180, I207, and 214-216 (SMM). Y180 is a catalytic residue.

This sequence belongs to the short-chain dehydrogenases/reductases (SDR) family.

The catalysed reaction is (S)-8-oxocitronellyl enol + NADP(+) = (6E)-8-oxogeranial + NADPH + H(+). It carries out the reaction (S)-8-oxocitronellyl enol + NAD(+) = (6E)-8-oxogeranial + NADH + H(+). Its function is as follows. Iridoid synthase that catalyzes the first step in generation of the iridoid ring scaffold using the linear monoterpene (6E)-8-oxogeranial as substrate. Iridoids comprise a large family of distinctive bicyclic monoterpenes that possess a wide range of pharmacological activities, including anticancer, anti-inflammatory, antifungal and antibacterial activities. Catalyzes the conversion of the linear monoterpene (6E)-8-oxogeranial to (S)-8-oxocitronellyl enol, a precursor of nepetalactones, which are metabolites that are both insect-repellent and have euphoric effect in cats. This Nepeta cataria (Catnip) protein is (S)-8-oxocitronellyl enol synthase ISY2.